We begin with the raw amino-acid sequence, 522 residues long: U4/U6 small nuclear ribonucleoprotein Prp4 (522 aa).

The segment covering 1 to 13 (MASSRASSTQATK) has biased composition (polar residues). Positions 1–20 (MASSRASSTQATKTKAPDDL) are disordered. Lys27 carries the N6-acetyllysine modification. 7 WD repeats span residues 229–268 (GDDR…LLHT), 271–318 (GHNT…PVAD), 321–360 (GHTV…EILH), 363–402 (GHSM…CIMF), 405–444 (GHLK…CVYT), 447–487 (AHQN…PLKT), and 490–521 (GHEG…LWMA).

As to quaternary structure, component of the precatalytic spliceosome (spliceosome B complex). Component of the U4/U6-U5 tri-snRNP complex, a building block of the precatalytic spliceosome (spliceosome B complex). The U4/U6-U5 tri-snRNP complex is composed of the U4, U6 and U5 snRNAs and at least PRPF3, PRPF4, PRPF6, PRPF8, PRPF31, SNRNP200, TXNL4A, SNRNP40, SNRPB, SNRPD1, SNRPD2, SNRPD3, SNRPE, SNRPF, SNRPG, DDX23, CD2BP2, PPIH, SNU13, EFTUD2, SART1 and USP39, plus LSM2, LSM3, LSM4, LSM5, LSM6, LSM7 and LSM8. Interacts directly with PRPF18, PPIH and PRPF3. Part of a heteromeric complex containing PPIH, PRPF3 and PRPF4 that is stable in the absence of RNA. Interacts with ERCC6.

Its subcellular location is the nucleus. The protein localises to the nucleus speckle. In terms of biological role, plays a role in pre-mRNA splicing as component of the U4/U6-U5 tri-snRNP complex that is involved in spliceosome assembly, and as component of the precatalytic spliceosome (spliceosome B complex). This is U4/U6 small nuclear ribonucleoprotein Prp4 (PRPF4) from Homo sapiens (Human).